Consider the following 462-residue polypeptide: 3-isopropylmalate dehydratase large subunit (462 aa).

Residues C337, C397, and C400 each coordinate [4Fe-4S] cluster.

Belongs to the aconitase/IPM isomerase family. LeuC type 1 subfamily. As to quaternary structure, heterodimer of LeuC and LeuD. The cofactor is [4Fe-4S] cluster.

It catalyses the reaction (2R,3S)-3-isopropylmalate = (2S)-2-isopropylmalate. The protein operates within amino-acid biosynthesis; L-leucine biosynthesis; L-leucine from 3-methyl-2-oxobutanoate: step 2/4. Its function is as follows. Catalyzes the isomerization between 2-isopropylmalate and 3-isopropylmalate, via the formation of 2-isopropylmaleate. This is 3-isopropylmalate dehydratase large subunit from Listeria monocytogenes serovar 1/2a (strain ATCC BAA-679 / EGD-e).